Reading from the N-terminus, the 393-residue chain is Upstream-binding factor 1-like protein 1 (393 aa).

DNA-binding regions (HMG box) lie at residues 100-168 (PKRP…ARFR) and 222-288 (QKPP…DLWL). Residues 308-393 (KNMAMTGGPD…SSGEEIEVDV (86 aa)) are disordered. Residues 365–377 (EENRKKDREKEES) are compositionally biased toward basic and acidic residues.

The protein resides in the cytoplasm. Its subcellular location is the nucleus. Functionally, essential for proliferation of the inner cell mass and trophectodermal cells in peri-implantation development. The protein is Upstream-binding factor 1-like protein 1 of Homo sapiens (Human).